The following is a 135-amino-acid chain: Basic phospholipase A2 6 (135 aa).

7 disulfide bridges follow: C28/C87, C42/C134, C44/C60, C59/C115, C66/C108, C76/C101, and C94/C106. The Ca(2+) site is built by Y43, G45, and G47. Residue H63 is part of the active site. D64 contributes to the Ca(2+) binding site. D109 is a catalytic residue.

This sequence belongs to the phospholipase A2 family. Group I subfamily. D49 sub-subfamily. It depends on Ca(2+) as a cofactor. As to expression, expressed by the venom gland.

It localises to the secreted. It carries out the reaction a 1,2-diacyl-sn-glycero-3-phosphocholine + H2O = a 1-acyl-sn-glycero-3-phosphocholine + a fatty acid + H(+). Its function is as follows. Snake venom phospholipase A2 (PLA2) that inhibits neuromuscular transmission by blocking acetylcholine release from the nerve termini. PLA2 catalyzes the calcium-dependent hydrolysis of the 2-acyl groups in 3-sn-phosphoglycerides. Very weakly suppress the acetylcholine (ACh)-evoked current mediated by alpha-7-similar nAChRs in L.stagnalis neurons. The chain is Basic phospholipase A2 6 from Bungarus fasciatus (Banded krait).